Consider the following 925-residue polypeptide: NADH:fumarate oxidoreductase (925 aa).

Thr447 bears the FMN phosphoryl threonine mark. FAD contacts are provided by Ala492, Glu511, Asn519, Thr520, Ala525, Gly526, and Val633. Ala525 lines the fumarate pocket. Ala525 provides a ligand contact to succinate. The succinate site is built by His719, Ser731, and Glu732. Fumarate contacts are provided by Ser731 and Glu732. Arg756 serves as the catalytic Proton donor. His859 is a fumarate binding site. His859 contributes to the succinate binding site. Residues His860 and Glu889 each coordinate FAD. Positions 899 and 902 each coordinate fumarate. Residues Arg899 and Gly902 each coordinate succinate. 2 residues coordinate FAD: Ala904 and Val905.

This sequence belongs to the FAD-dependent oxidoreductase 2 family. FRD/SDH subfamily. As to quaternary structure, monomer. The cofactor is FAD. Requires FMN as cofactor. Is flavinylated on Thr-447 by ApbE2, encoded in a neighboring gene. Flavinylation is essential for catalytic activity.

The protein resides in the cytoplasm. The catalysed reaction is succinate + NAD(+) = fumarate + NADH + H(+). Catalyzes the anaerobic reduction of fumarate to succinate. Uses NADH as the inherent electron donor in this process. Is involved in anaerobic fumarate respiration in K.pneumoniae. In Klebsiella pneumoniae (strain 342), this protein is NADH:fumarate oxidoreductase.